Reading from the N-terminus, the 508-residue chain is MTLDVSRQDPRYNTLKHGFNLRWPSTDAQAAGRIALCEKADDVAPALQHIIDTGMRPTVRSGGHCYEDFVSNNPDGAIVDLSLLNAPEVRADGTVRIPAGTQNWNGYLELYKRHNLTLPGGSCYSVGAGGHICGGGYGLLSRLQGLTVDWLSAVDIVTVDRQGRAAPRTVDATRDPELFRACRGAGGGNFGIITAYTFARLPEAPREVALATVAFDWAAMTPERFAELLRLYGEYWETRGKDPDTWGMFSLLKLTHRSAGQIVMLTQFCNPDGTCRDLSVLNDFLARFRACAPVPLKGRPPGYGPAHRQGVGQLLCSKPHTVVRYDWLTATQTVNGSGPNQRGKYKSAYMKRGFTAREAQRIYTHLTRTVPGIDLSQSLLQVDSYGGAVNKTERIADTAVPQRASVMKLQYQTYWTSAADDAGHLRWIGDFYRDVYGTPDVSAPHAGTPYPGDRYEGCYINYPDVDMLAYPFWPQLYYGDGDLYAFLQRVKRRYDPNNIFHHAMSVRP.

The region spanning 26–203 (TDAQAAGRIA…TAYTFARLPE (178 aa)) is the FAD-binding PCMH-type domain. The 6-(S-cysteinyl)-8alpha-(pros-histidyl)-FAD (His-Cys) cross-link spans 64–123 (HCYEDFVSNNPDGAIVDLSLLNAPEVRADGTVRIPAGTQNWNGYLELYKRHNLTLPGGSC).

The protein belongs to the oxygen-dependent FAD-linked oxidoreductase family. FAD serves as cofactor.

The enzyme catalyses N-acetyl-D-glucosamine + O2 + H2O = N-acetyl-D-glucosaminate + H2O2 + H(+). It catalyses the reaction N-acetyl-D-galactosamine + O2 + H2O = N-acetyl-D-galactosaminate + H2O2 + H(+). It carries out the reaction N-acetyl-D-glucosamine + O2 = N-acetyl-D-glucosamino-1,5-lactone + H2O2. The catalysed reaction is N-acetyl-D-galactosamine + O2 = N-acetyl-D-galactosamino-1,5-lactone + H2O2. Catalyzes the oxidation of a range of monosaccharides in vitro, displaying the highest activity with N-acetylglucosamine (GlcNAc) and N-acetylgalactosamine (GalNAc), with a reduction of O2 to H2O2. Acts upon the C1 carbon of the GlcNAc or GalNAc molecule, producing the corresponding lactone, which can spontaneously hydrolyze. Its biological function is unclear, but its main function might be connected to extracellular production of hydrogen peroxide to compete with other organisms through oxidative stress, or support the action of peroxidases and peroxygenases. This Ralstonia solanacearum (strain UW551) protein is N-acetyl-D-hexosamine oxidase.